The following is a 434-amino-acid chain: Trigger factor 2 (434 aa).

Residues 164 to 247 form the PPIase FKBP-type domain; that stretch reads GDTVTVDYDC…VKKVERIEIL (84 aa).

Belongs to the FKBP-type PPIase family. Tig subfamily.

The protein localises to the cytoplasm. It catalyses the reaction [protein]-peptidylproline (omega=180) = [protein]-peptidylproline (omega=0). In terms of biological role, involved in protein export. Acts as a chaperone by maintaining the newly synthesized protein in an open conformation. Functions as a peptidyl-prolyl cis-trans isomerase. This chain is Trigger factor 2, found in Desulfitobacterium hafniense (strain Y51).